The primary structure comprises 48 residues: Large ribosomal subunit protein bL33A (48 aa).

It belongs to the bacterial ribosomal protein bL33 family.

This is Large ribosomal subunit protein bL33A from Streptococcus pyogenes serotype M28 (strain MGAS6180).